The primary structure comprises 402 residues: UPF0261 protein BP1203 (402 aa).

It belongs to the UPF0261 family.

The chain is UPF0261 protein BP1203 from Bordetella pertussis (strain Tohama I / ATCC BAA-589 / NCTC 13251).